Consider the following 368-residue polypeptide: Seipin-1 (368 aa).

Helical transmembrane passes span 26 to 46, 101 to 121, and 292 to 312; these read WFMV…VVLS, VMVL…SLYV, and LCVW…LWCF. The tract at residues 344 to 368 is disordered; the sequence is MERRRRERRNQPRRRNFATTQKSYT. Residues 346–359 show a composition bias toward basic residues; the sequence is RRRRERRNQPRRRN.

This sequence belongs to the seipin family. Expressed in seeds and young seedlings. Not detected in leaves.

The protein resides in the endoplasmic reticulum membrane. Its function is as follows. Involved in lipid metabolism and lipid droplet (LD) morphology, number, and size. Facilitates the formation of large-sized LDs and modulates triacylglycerol accumulation. Induces probably a reorganization of the endoplasmic reticulum into LD-forming domains. This Arabidopsis thaliana (Mouse-ear cress) protein is Seipin-1.